A 21-amino-acid polypeptide reads, in one-letter code: IIGGDECNINEHPFLVALYDA.

Positions 1 to 21 (IIGGDECNINEHPFLVALYDA) constitute a Peptidase S1 domain.

The protein belongs to the peptidase S1 family. Snake venom subfamily. Monomer. Post-translationally, glycosylated; contains 35.8% neutral carbohydrate. In terms of tissue distribution, expressed by the venom gland.

The protein localises to the secreted. Inhibited by PMSF and soybean trypsin inhibitor. Partially inhibited by L-cysteine and DTT. Not affected by EDTA. In terms of biological role, multifunctional venom serine protease that has fibrino(geno)lytic activity towards the A alpha-chain of human fibrinogen (FGA) and a slow activity towards the B beta-chain (FGB). Also hydrolyzes bovine low-molecular-mass kininogen and releases bradykinin. Catalyzes the hydrolysis of BAEE, S-2238 and S-2302. The chain is Snake venom serine protease jerdonase from Protobothrops jerdonii (Jerdon's pitviper).